The primary structure comprises 326 residues: Zinc finger CCCH domain-containing protein 15 (326 aa).

Over residues 1–14 (MADGGGGGEAGSGG) the composition is skewed to gly residues. Residues 1–142 (MADGGGGGEA…SSSGSGSGEV (142 aa)) are disordered. Positions 24 to 33 (KPPKNIRKRP) are enriched in basic residues. Low complexity predominate over residues 47–64 (SGAIAAARAKKAPSSTSK). Positions 81–100 (YESSRTIQASTDSRATATLE) are enriched in polar residues. The span at 104-125 (EFDRDARAIRERQLKQAEESLK) shows a compositional bias: basic and acidic residues. The C3H1-type zinc finger occupies 187 to 215 (DYQPDICKDYKETGYCGYGDSCKFMHDRG). An RING-type zinc finger spans residues 265–303 (CYICREPFVDPVVTKCKHYFCEHCALKHHSKNKKCFVCN).

In Oryza sativa subsp. japonica (Rice), this protein is Zinc finger CCCH domain-containing protein 15.